The primary structure comprises 91 residues: Probable Fe(2+)-trafficking protein (91 aa).

The protein belongs to the Fe(2+)-trafficking protein family.

Functionally, could be a mediator in iron transactions between iron acquisition and iron-requiring processes, such as synthesis and/or repair of Fe-S clusters in biosynthetic enzymes. This is Probable Fe(2+)-trafficking protein from Glaesserella parasuis serovar 5 (strain SH0165) (Haemophilus parasuis).